The primary structure comprises 160 residues: NADH-quinone oxidoreductase subunit B (160 aa).

Residues Cys-37, Cys-38, Cys-102, and Cys-132 each contribute to the [4Fe-4S] cluster site.

The protein belongs to the complex I 20 kDa subunit family. As to quaternary structure, NDH-1 is composed of 14 different subunits. Subunits NuoB, C, D, E, F, and G constitute the peripheral sector of the complex. [4Fe-4S] cluster serves as cofactor.

Its subcellular location is the cell inner membrane. It carries out the reaction a quinone + NADH + 5 H(+)(in) = a quinol + NAD(+) + 4 H(+)(out). In terms of biological role, NDH-1 shuttles electrons from NADH, via FMN and iron-sulfur (Fe-S) centers, to quinones in the respiratory chain. Couples the redox reaction to proton translocation (for every two electrons transferred, four hydrogen ions are translocated across the cytoplasmic membrane), and thus conserves the redox energy in a proton gradient. This Cupriavidus pinatubonensis (strain JMP 134 / LMG 1197) (Cupriavidus necator (strain JMP 134)) protein is NADH-quinone oxidoreductase subunit B.